Here is a 241-residue protein sequence, read N- to C-terminus: MAKGIFIVGTDTDIGKTVVTAGLMHVLRSRGYNAVYFKAALSGALEIDNKLIPSDTKLVSDVSKLEEPYENITPYVYRTGVSPHLAARLENNPMDLDIVKEKYVYLKEKYDFIIAEGSGGIVCPLIDDGRGVYTIGNLIKDLNMSVIIVASAGLGTINHTVLTAKYIENLGIKIEGIIINKYEKDLFYDDNIGMIEKITKLPIVAKLKNIKDMNDNEIEAIRIHSEKAFSAENIIKHMEQL.

13-18 (DIGKTV) serves as a coordination point for ATP. Residue Thr17 participates in Mg(2+) binding. Residue Lys38 is part of the active site. Position 42 (Ser42) interacts with substrate. Residues Asp55, 116-119 (EGSG), and 180-181 (NK) each bind ATP. Asp55 and Glu116 together coordinate Mg(2+).

The protein belongs to the dethiobiotin synthetase family. Homodimer. Mg(2+) is required as a cofactor.

The protein localises to the cytoplasm. The enzyme catalyses (7R,8S)-7,8-diammoniononanoate + CO2 + ATP = (4R,5S)-dethiobiotin + ADP + phosphate + 3 H(+). It functions in the pathway cofactor biosynthesis; biotin biosynthesis; biotin from 7,8-diaminononanoate: step 1/2. Its function is as follows. Catalyzes a mechanistically unusual reaction, the ATP-dependent insertion of CO2 between the N7 and N8 nitrogen atoms of 7,8-diaminopelargonic acid (DAPA, also called 7,8-diammoniononanoate) to form a ureido ring. The protein is ATP-dependent dethiobiotin synthetase BioD of Clostridium kluyveri (strain NBRC 12016).